The following is a 628-amino-acid chain: Chaperone protein DnaK (628 aa).

Thr-197 is modified (phosphothreonine; by autocatalysis). Residues Glu-597–Glu-628 form a disordered region.

It belongs to the heat shock protein 70 family.

Functionally, acts as a chaperone. In Sulfurimonas denitrificans (strain ATCC 33889 / DSM 1251) (Thiomicrospira denitrificans (strain ATCC 33889 / DSM 1251)), this protein is Chaperone protein DnaK.